Consider the following 470-residue polypeptide: ADAM DEC1 (470 aa).

The N-terminal stretch at 1–30 is a signal peptide; the sequence is MLRGISQLPAVATMSWVLLPVLWLIVQTQA. Positions 31-205 are excised as a propeptide; that stretch reads IAIKQTPELT…QGPIRISRSL (175 aa). Asn61 carries N-linked (GlcNAc...) asparagine glycosylation. A disordered region spans residues 173–200; it reads FTSNQEEQDPANHTCGVKSTDGKQGPIR. An N-linked (GlcNAc...) (complex) asparagine glycan is attached at Asn184. Positions 218–412 constitute a Peptidase M12B domain; that stretch reads KYIDLYLVLD…QKPKCLLQAP (195 aa). A glycan (N-linked (GlcNAc...) asparagine) is linked at Asn237. 2 disulfide bridges follow: Cys328-Cys407 and Cys369-Cys374. His352 is a Zn(2+) binding site. The active site involves Glu353. Zn(2+)-binding residues include His356 and Asp362. The region spanning 420 to 470 is the Disintegrin domain; sequence TPVCGNHLLEVGEDCDCGSPKECTNLCCEALTCKLKPGTDCGGDAPNHTTE. Asn466 is a glycosylation site (N-linked (GlcNAc...) asparagine).

Zn(2+) serves as cofactor. As to expression, expressed highly in the small intestine and appendix, moderately in lymph node, mucosal lining of the colon, thymus, spleen and very weakly in the bone marrow. Predominantly expressed in dendritic cells (DC) of the germinal center. Weakly expressed in monocyte and highly expressed in macrophage. Absent in immature DC.

It is found in the secreted. Functionally, may play an important role in the control of the immune response and during pregnancy. The protein is ADAM DEC1 (ADAMDEC1) of Homo sapiens (Human).